Reading from the N-terminus, the 247-residue chain is SPX domain-containing protein 5 (247 aa).

Residues 1-139 (MKFGKRLKRQ…GGVLRLPVIA (139 aa)) form the SPX domain. The interval 224–247 (SDWLIQSVQPPPPPPPSSPLIIPT) is disordered. The segment covering 232 to 241 (QPPPPPPPSS) has biased composition (pro residues).

This is SPX domain-containing protein 5 (SPX5) from Oryza sativa subsp. indica (Rice).